Consider the following 308-residue polypeptide: UDP-N-acetylenolpyruvoylglucosamine reductase (308 aa).

Residues 32–196 (VGGPAARLYK…ISAKLQLSPG (165 aa)) form the FAD-binding PCMH-type domain. Arg176 is an active-site residue. Ser225 serves as the catalytic Proton donor. Glu296 is an active-site residue.

This sequence belongs to the MurB family. FAD is required as a cofactor.

The protein localises to the cytoplasm. The enzyme catalyses UDP-N-acetyl-alpha-D-muramate + NADP(+) = UDP-N-acetyl-3-O-(1-carboxyvinyl)-alpha-D-glucosamine + NADPH + H(+). It participates in cell wall biogenesis; peptidoglycan biosynthesis. Its function is as follows. Cell wall formation. The polypeptide is UDP-N-acetylenolpyruvoylglucosamine reductase (Legionella pneumophila (strain Lens)).